Consider the following 507-residue polypeptide: MLWYIVAGAGGLLIGYLIASYQINQKLRKAKEDAQTIIEKAEKEANEIKKKAIIEGREEVHRLREEFEKERSRREEELRAFEERILKREELLTRKEENLEKREHQIEELKANLEEKMREVEEKEKRIDEELKRLAGMTVEEARELILEEARQRYEHDLAKLYKEMKEQVEEEVEKEAKKVIAFAVQRYAPDYVGEITVSTVSLPSDDMKGRIIGREGRNIRTFEKITGVDLIIDDTPEVVVLSCFNPLRREIARITLEKLVADGRIHPARIEEMYEKAKQEVEKAIKEAGQEATFKAGVMGLHPELVKLLGKLKYRTSYGQNVLNHSIEVALLAGYMASELGLNADKARRGGLLHDIGKAVDQELEGSHTTIGAELARRYGEKEDIINMILSHHGEEEPMTPEAVLVAAADALSAARPGARRESLENYIKRLMKLEEIAKSFKYVEKAYAIQAGREIRVIVEPDKVDDALAEKLAYDISKKIEEELEYPGVLKVVVIREKRSVAYAK.

A helical transmembrane segment spans residues 1–21; sequence MLWYIVAGAGGLLIGYLIASY. The 86-residue stretch at 197-282 folds into the KH domain; sequence TVSTVSLPSD…EMYEKAKQEV (86 aa). The HD domain occupies 323–416; the sequence is VLNHSIEVAL…VAAADALSAA (94 aa).

This sequence belongs to the RNase Y family.

The protein resides in the cell membrane. Functionally, endoribonuclease that initiates mRNA decay. The chain is Ribonuclease Y from Thermotoga petrophila (strain ATCC BAA-488 / DSM 13995 / JCM 10881 / RKU-1).